The following is a 251-amino-acid chain: Triosephosphate isomerase (251 aa).

9–11 contacts substrate; it reads NWK. The Electrophile role is filled by His95. Glu167 functions as the Proton acceptor in the catalytic mechanism. Substrate contacts are provided by residues Gly173, Ser213, and 234 to 235; that span reads GG.

Belongs to the triosephosphate isomerase family. Homodimer.

The protein resides in the cytoplasm. The catalysed reaction is D-glyceraldehyde 3-phosphate = dihydroxyacetone phosphate. It participates in carbohydrate biosynthesis; gluconeogenesis. Its pathway is carbohydrate degradation; glycolysis; D-glyceraldehyde 3-phosphate from glycerone phosphate: step 1/1. Its function is as follows. Involved in the gluconeogenesis. Catalyzes stereospecifically the conversion of dihydroxyacetone phosphate (DHAP) to D-glyceraldehyde-3-phosphate (G3P). The chain is Triosephosphate isomerase from Geotalea uraniireducens (strain Rf4) (Geobacter uraniireducens).